The sequence spans 467 residues: Na(+)/H(+) exchange regulatory cofactor-like protein nrfl-1 (467 aa).

PDZ domains lie at 12–94 (RLCV…ISEE) and 143–225 (LAEL…ASED). A disordered region spans residues 344–429 (MSSHTEVLPP…ASSTSGYDDD (86 aa)). Polar residues predominate over residues 407-425 (PSPLSNGSSHGYAASSTSG).

As to quaternary structure, interacts (via PDZ 2 domain) with aat-6 (via PDZ-binding motif); the interaction sequesters aat-6 to the apical cell membrane of intestinal cells. Phosphorylated. As to expression, expressed in the excretory canal and intestine. Expressed on the apical cell membrane of intestinal cells (at protein level).

The protein resides in the cell projection. It is found in the microvillus membrane. It localises to the apical cell membrane. Functionally, scaffold protein that connects plasma membrane proteins with members of the ezrin/moesin/radixin family and thereby helps to link them to the actin cytoskeleton and to regulate their surface expression. Anchors the amino acid transporter protein aat-6 to the apical cell membrane of intestinal cells, particularly in older animals, in order to maintain amino acid homeostasis. May play a role in promoting fertility. This chain is Na(+)/H(+) exchange regulatory cofactor-like protein nrfl-1, found in Caenorhabditis elegans.